Consider the following 130-residue polypeptide: Small ribosomal subunit protein uS8y (130 aa).

It belongs to the universal ribosomal protein uS8 family.

The polypeptide is Small ribosomal subunit protein uS8y (RPS15AC) (Arabidopsis thaliana (Mouse-ear cress)).